A 505-amino-acid chain; its full sequence is Trans-cinnamate 4-monooxygenase (505 aa).

Residues 3-23 (LLLLEKTLLGLFLAAVVAIVV) form a helical membrane-spanning segment. (E)-cinnamate is bound by residues 213–218 (RSRLAQ) and alanine 306. Cysteine 447 provides a ligand contact to heme.

The protein belongs to the cytochrome P450 family. It depends on heme as a cofactor.

The protein resides in the membrane. The enzyme catalyses (E)-cinnamate + reduced [NADPH--hemoprotein reductase] + O2 = (E)-4-coumarate + oxidized [NADPH--hemoprotein reductase] + H2O + H(+). It participates in phenylpropanoid metabolism; trans-4-coumarate biosynthesis; trans-4-coumarate from trans-cinnamate: step 1/1. Functionally, catalyzes the first oxidative step of the phenylpropanoid pathway in higher plants by transforming trans-cinnamate into p-coumarate. The compounds formed by this pathway are essential components for lignification, pollination, and defense against ultraviolet light, predators and pathogens. The sequence is that of Trans-cinnamate 4-monooxygenase (CYP73A2) from Vigna radiata var. radiata (Mung bean).